The chain runs to 151 residues: High mobility group B protein 14 (151 aa).

2 disordered regions span residues 1-62 and 132-151; these read MTKR…QTKM and TKRM…DYSE. Positions 7-20 are enriched in low complexity; that stretch reads KSGPLSPSCSGGSS. Basic residues predominate over residues 35 to 56; it reads RSTRLRLQPLRKPKTSPKKKPV. The segment at residues 63–132 is a DNA-binding region (HMG box); that stretch reads PKKPATAFFF…EFHRAMTEYT (70 aa). The segment covering 132 to 142 has biased composition (basic and acidic residues); the sequence is TKRMESGAHDE. Residue serine 150 is modified to Phosphoserine.

The protein belongs to the HMGB family.

Its subcellular location is the nucleus. This Arabidopsis thaliana (Mouse-ear cress) protein is High mobility group B protein 14 (HMGB14).